The sequence spans 355 residues: Peptide chain release factor 1 (355 aa).

Position 233 is an N5-methylglutamine (glutamine 233).

Belongs to the prokaryotic/mitochondrial release factor family. Post-translationally, methylated by PrmC. Methylation increases the termination efficiency of RF1.

The protein resides in the cytoplasm. Peptide chain release factor 1 directs the termination of translation in response to the peptide chain termination codons UAG and UAA. The sequence is that of Peptide chain release factor 1 from Caldicellulosiruptor saccharolyticus (strain ATCC 43494 / DSM 8903 / Tp8T 6331).